Consider the following 105-residue polypeptide: uncharacterized protein (105 aa).

Belongs to the EspC family.

Functionally, may be involved in assembly of the ESX-1 / type VII specialized secretion system (T7SS), which exports several proteins including EsxA and EsxB. Involved in DNA conjugation, in at least recipient strain. This is an uncharacterized protein from Mycolicibacterium smegmatis (strain MKD8) (Mycobacterium smegmatis).